The chain runs to 279 residues: Prepilin leader peptidase/N-methyltransferase (279 aa).

Over 1-16 (MDDLREFAQLFPAWWF) the chain is Periplasmic. A helical transmembrane segment spans residues 17 to 35 (GALGVLGLIVGSFLNVVIY). The Cytoplasmic segment spans residues 36-104 (RLPIMLERRW…RSRCCHQSVS (69 aa)). Residues 105-123 (VQYPLVEVITMLAFLAAGL) form a helical membrane-spanning segment. The Periplasmic portion of the chain corresponds to 124–130 (LWLPGMA). The helical transmembrane segment at 131-149 (LWGALILLSFLLVLTVIDI) threads the bilayer. Residues 150 to 163 (KTLLLPDELTLSLL) are Cytoplasmic-facing. A helical membrane pass occupies residues 164 to 182 (WMGLLFNLSGTFVSLNDAV). The Periplasmic portion of the chain corresponds to 183–185 (VGA). The chain crosses the membrane as a helical span at residues 186-204 (MAGYLSLWLLYWAFKYATG). The Cytoplasmic segment spans residues 205–214 (KEALGYGDFK). The chain crosses the membrane as a helical span at residues 215-233 (LLAALGAWLGWQALPNLVL). Over 234–236 (VAA) the chain is Periplasmic. A helical transmembrane segment spans residues 237–254 (LSGLVVTLIWRGLRKEDT). Over 255-257 (AKP) the chain is Cytoplasmic. The chain crosses the membrane as a helical span at residues 258–276 (LAFGPWLAIGGVFGMIMNG). Residues 277 to 279 (FNL) are Periplasmic-facing.

It belongs to the peptidase A24 family.

The protein resides in the cell inner membrane. It carries out the reaction Typically cleaves a -Gly-|-Phe- bond to release an N-terminal, basic peptide of 5-8 residues from type IV prepilin, and then N-methylates the new N-terminal amino group, the methyl donor being S-adenosyl-L-methionine.. Functionally, plays a role in type II pseudopili formation by proteolytically removing the leader sequence from substrate proteins and subsequently monomethylating the alpha-amino group of the newly exposed N-terminal phenylalanine. Substrates include proteins required for biogenesis of the type II general secretory apparatus. This is Prepilin leader peptidase/N-methyltransferase (outO) from Pectobacterium carotovorum subsp. carotovorum (Erwinia carotovora subsp. carotovora).